The sequence spans 335 residues: Large ribosomal subunit protein uL10 (335 aa).

Residues 304–335 (GAAAPVEEAPVEEKKEEKKEEAAPAAGLGMLF) are disordered. The span at 314–325 (VEEKKEEKKEEA) shows a compositional bias: basic and acidic residues.

This sequence belongs to the universal ribosomal protein uL10 family. Part of the 50S ribosomal subunit. Forms part of the ribosomal stalk which helps the ribosome interact with GTP-bound translation factors. Forms a heptameric L10(L12)2(L12)2(L12)2 complex, where L10 forms an elongated spine to which the L12 dimers bind in a sequential fashion.

In terms of biological role, forms part of the ribosomal stalk, playing a central role in the interaction of the ribosome with GTP-bound translation factors. The protein is Large ribosomal subunit protein uL10 of Methanococcus maripaludis (strain C6 / ATCC BAA-1332).